Consider the following 66-residue polypeptide: MDPPARKEKSKVKEPAFRVEKAKQKSAQQELKQRQRAEIYALNRVMTELEQQQFDEFCKQMQPPGE.

The segment covering 1 to 23 (MDPPARKEKSKVKEPAFRVEKAK) has biased composition (basic and acidic residues). The tract at residues 1 to 30 (MDPPARKEKSKVKEPAFRVEKAKQKSAQQE) is disordered. Residues 5–52 (ARKEKSKVKEPAFRVEKAKQKSAQQELKQRQRAEIYALNRVMTELEQQ) are a coiled coil.

The protein belongs to the SVBP family. As to quaternary structure, interacts with VASH1 and VASH2. Highly expressed in bone marrow, spleen and testis.

It localises to the cytoplasm. It is found in the secreted. The protein resides in the cytoskeleton. Enhances the tyrosine carboxypeptidase activity of VASH1 and VASH2, thereby promoting the removal of the C-terminal tyrosine residue of alpha-tubulin. Also required to enhance the solubility and secretion of VASH1 and VASH2. Plays a role in axon and excitatory synapse formation. The chain is Small vasohibin-binding protein from Mus musculus (Mouse).